The following is a 282-amino-acid chain: Shikimate dehydrogenase (NADP(+)) (282 aa).

Shikimate contacts are provided by residues 15 to 17 and Thr62; that span reads SKS. The Proton acceptor role is filled by Lys66. The shikimate site is built by Asn87 and Asp103. NADP(+) contacts are provided by residues 127 to 131, 151 to 156, and Met220; these read GAGGA and NRTHTK. Residue Tyr222 coordinates shikimate. Gly244 lines the NADP(+) pocket.

This sequence belongs to the shikimate dehydrogenase family. Homodimer.

It catalyses the reaction shikimate + NADP(+) = 3-dehydroshikimate + NADPH + H(+). It functions in the pathway metabolic intermediate biosynthesis; chorismate biosynthesis; chorismate from D-erythrose 4-phosphate and phosphoenolpyruvate: step 4/7. Functionally, involved in the biosynthesis of the chorismate, which leads to the biosynthesis of aromatic amino acids. Catalyzes the reversible NADPH linked reduction of 3-dehydroshikimate (DHSA) to yield shikimate (SA). In Shewanella baltica (strain OS185), this protein is Shikimate dehydrogenase (NADP(+)).